The following is a 261-amino-acid chain: L-erythrulose-1-phosphate isomerase (261 aa).

Histidine 99 (electrophile) is an active-site residue. Catalysis depends on glutamate 172, which acts as the Proton acceptor.

This sequence belongs to the triosephosphate isomerase family.

It carries out the reaction L-erythrulose 1-phosphate = D-erythrulose 4-phosphate. Its pathway is carbohydrate metabolism. Its function is as follows. Involved in catabolism of D-apiose. Catalyzes the isomerization of L-erythrulose 1-phosphate to D-erythrulose 4-phosphate. The protein is L-erythrulose-1-phosphate isomerase of Rhizobium rhizogenes (strain K84 / ATCC BAA-868) (Agrobacterium radiobacter).